The primary structure comprises 177 residues: Small ribosomal subunit protein bS21m (177 aa).

The N-terminal 17 residues, 1–17 (MLKSTLRLSRISLRRGF), are a transit peptide targeting the mitochondrion.

This sequence belongs to the bacterial ribosomal protein bS21 family. Component of the mitochondrial small ribosomal subunit (mt-SSU). Mature yeast 74S mitochondrial ribosomes consist of a small (37S) and a large (54S) subunit. The 37S small subunit contains a 15S ribosomal RNA (15S mt-rRNA) and 34 different proteins. The 54S large subunit contains a 21S rRNA (21S mt-rRNA) and 46 different proteins.

Its subcellular location is the mitochondrion. Functionally, component of the mitochondrial ribosome (mitoribosome), a dedicated translation machinery responsible for the synthesis of mitochondrial genome-encoded proteins, including at least some of the essential transmembrane subunits of the mitochondrial respiratory chain. The mitoribosomes are attached to the mitochondrial inner membrane and translation products are cotranslationally integrated into the membrane. This chain is Small ribosomal subunit protein bS21m (MRP21), found in Saccharomyces cerevisiae (strain ATCC 204508 / S288c) (Baker's yeast).